The sequence spans 191 residues: Chromobox protein homolog 5 (191 aa).

The disordered stretch occupies residues 1 to 21 (MGKKTKRTADSSSSEDEEEYV). A phosphoserine mark is found at Ser-11, Ser-12, Ser-13, and Ser-14. The Chromo 1 domain occupies 20 to 78 (YVVEKVLDRRMVKGQVEYLLKWKGFSEEHNTWEPEKNLDCPELISEFMKKYKKMKEGEN). A Glycyl lysine isopeptide (Lys-Gly) (interchain with G-Cter in SUMO2) cross-link involves residue Lys-32. Lys-40 bears the N6-acetyllysine mark. Positions 70–117 (YKKMKEGENNKPREKSEGNKRKSSFSNSADDIKSKKKREQSNDIARGF) are disordered. Over residues 73–89 (MKEGENNKPREKSEGNK) the composition is skewed to basic and acidic residues. Residue Lys-91 forms a Glycyl lysine isopeptide (Lys-Gly) (interchain with G-Cter in SUMO2) linkage. Residues Ser-92, Ser-93, Ser-95, and Ser-97 each carry the phosphoserine modification. Glycyl lysine isopeptide (Lys-Gly) (interchain with G-Cter in SUMO2) cross-links involve residues Lys-102, Lys-106, Lys-154, and Lys-184. One can recognise a Chromo 2; shadow subtype domain in the interval 121–179 (LEPEKIIGATDSCGDLMFLMKWKDTDEADLVLAKEANVKCPQIVIAFYEERLTWHAYPE).

In terms of assembly, homodimer. Interacts with histone H3 methylated at 'Lys-9'. Interacts (via Chromo 2; shadow subtype domain) with the MIS12 complex subunit NSL1; the interaction is direct, involves dimeric CBX5, and occurs during interphase. Interacts with POGZ; POGZ and PXVXL motif-containing proteins such as INCENP and TRIM28 compete for interaction with CBX5. Interacts with LRIF1 (via PxVxL motif). Interacts with INCENP. Interacts with TRIM24. Interacts (via the chromoshadow domain) with ATRX; the interaction is direct. Interacts (via the chromoshadow domain) with CHAF1A; the interaction is direct. Interacts (via the chromoshadow domain) with LBR; the interaction is direct. Interacts (via the chromoshadow domain) with NIPBL; the interaction is direct. Interacts (via the chromoshadow domain) with SP100; the interaction is direct. Interacts (via the chromoshadow domain) with STAM2; the interaction is direct. Interacts (via the chromoshadow domain) with TRIM28; the interaction is direct. Interacts (via the chromoshadow domain) with CBX3; the interaction is direct. Interacts with PRR14 (via N-terminus). Interacts with RRP1B. Interacts with HNRNPU (via C-terminus); this interaction is, at least in part, RNA-dependent. Interacts with ZNF263; recruited to the SIX3 promoter along with other proteins involved in chromatin modification and transcriptional corepression where it contributes to transcriptional repression. Interacts with AURKB during mitosis. Interacts with CHAMP1. Interacts with BAHD1. Interacts with HP1BP3. Interacts with CHD3. Interacts with CHD4. Interacts with SMYD5. Interacts with KMT5B. Interacts with KMT5C. Post-translationally, phosphorylation of HP1 and LBR may be responsible for some of the alterations in chromatin organization and nuclear structure which occur at various times during the cell cycle. Phosphorylated during interphase and possibly hyper-phosphorylated during mitosis. Ubiquitinated.

It localises to the nucleus. The protein localises to the chromosome. Its subcellular location is the centromere. Its function is as follows. Component of heterochromatin that recognizes and binds histone H3 tails methylated at 'Lys-9' (H3K9me), leading to epigenetic repression. In contrast, it is excluded from chromatin when 'Tyr-41' of histone H3 is phosphorylated (H3Y41ph). May contribute to the association of heterochromatin with the inner nuclear membrane by interactions with the lamin-B receptor (LBR). Involved in the formation of kinetochore through interaction with the MIS12 complex subunit NSL1. Required for the formation of the inner centromere. Component of heterochromatin that recognizes and binds histone H3 tails methylated at 'Lys-9' (H3K9me), leading to epigenetic repression. In contrast, it is excluded from chromatin when 'Tyr-41' of histone H3 is phosphorylated (H3Y41ph). Can interact with lamin-B receptor (LBR). This interaction can contribute to the association of the heterochromatin with the inner nuclear membrane. Involved in the formation of functional kinetochore through interaction with MIS12 complex proteins. The protein is Chromobox protein homolog 5 (Cbx5) of Mus musculus (Mouse).